The primary structure comprises 418 residues: 3-phosphoshikimate 1-carboxyvinyltransferase (418 aa).

3-phosphoshikimate contacts are provided by Lys-26, Ser-27, and Arg-31. Residue Lys-26 coordinates phosphoenolpyruvate. Phosphoenolpyruvate contacts are provided by Gly-97 and Arg-125. 3-phosphoshikimate contacts are provided by Ser-170, Ser-171, Gln-172, Asp-297, Asn-320, and Lys-324. Gln-172 is a phosphoenolpyruvate binding site. Residue Asp-297 is the Proton acceptor of the active site. Phosphoenolpyruvate is bound by residues Arg-328, Arg-375, and Lys-400.

Belongs to the EPSP synthase family. Monomer.

It is found in the cytoplasm. The enzyme catalyses 3-phosphoshikimate + phosphoenolpyruvate = 5-O-(1-carboxyvinyl)-3-phosphoshikimate + phosphate. It participates in metabolic intermediate biosynthesis; chorismate biosynthesis; chorismate from D-erythrose 4-phosphate and phosphoenolpyruvate: step 6/7. Functionally, catalyzes the transfer of the enolpyruvyl moiety of phosphoenolpyruvate (PEP) to the 5-hydroxyl of shikimate-3-phosphate (S3P) to produce enolpyruvyl shikimate-3-phosphate and inorganic phosphate. This chain is 3-phosphoshikimate 1-carboxyvinyltransferase, found in Pseudomonas syringae pv. tomato (strain ATCC BAA-871 / DC3000).